The following is a 318-amino-acid chain: Zinc chaperone YjiA (318 aa).

11–19 (GFLGAGKTT) is a binding site for GTP. Residues Glu-37, Glu-42, Cys-66, Glu-74, and His-114 each contribute to the Zn(2+) site. Residues 64–67 (CICC) carry the CXCC motif motif. Asp-161 is a GTP binding site. Glu-167, His-170, and His-187 together coordinate Zn(2+). The region spanning 224–315 (ISSIVVELDY…EEEIRAAFAG (92 aa)) is the CobW C-terminal domain.

This sequence belongs to the SIMIBI class G3E GTPase family. ZNG1 subfamily. Monomer in the apo form. Metal binding induces oligomerization. Forms homodimers and higher oligomers.

It catalyses the reaction GTP + H2O = GDP + phosphate + H(+). Its activity is regulated as follows. GTPase activity is inhibited by metal binding. Activity is decreased in the presence of Co(II) or Ni(II), and is completely inhibited in the presence of Zn(II). In terms of biological role, zinc chaperone that directly transfers zinc cofactor to target proteins, thereby activating them. Zinc is transferred from the CXCC motif in the GTPase domain to the zinc binding site in target proteins in a process requiring GTP hydrolysis. The sequence is that of Zinc chaperone YjiA (yjiA) from Escherichia coli (strain K12).